The sequence spans 348 residues: Ileal sodium/bile acid cotransporter (348 aa).

Residues 1–28 (MNDPNSCVDNATVCSGASCVVPESNFNN) are Extracellular-facing. An N-linked (GlcNAc...) asparagine glycan is attached at N10. The chain crosses the membrane as a helical span at residues 29–49 (ILSVVLSTVLTILLALVMFSM). Residues 50-82 (GCNVEIKKFLGHIKRPWGICVGFLCQFGIMPLT) lie on the Cytoplasmic side of the membrane. A helical membrane pass occupies residues 83 to 103 (GFILSVAFDILPLQAVVVLII). At 104-126 (GCCPGGTASNILAYWVDGDMDLS) the chain is on the extracellular side. A helical membrane pass occupies residues 127 to 147 (VSMTTCSTLLALGMMPLCLLI). The Cytoplasmic portion of the chain corresponds to 148–157 (YTKMWVDSGS). The chain crosses the membrane as a helical span at residues 158–178 (IVIPYDNIGTSLVSLVVPVSI). At 179–195 (GMFVNHKWPQKAKIILK) the chain is on the extracellular side. A helical membrane pass occupies residues 196–216 (IGSIAGAILIVLIAVVGGILY). At 217-224 (QSAWIIAP) the chain is on the cytoplasmic side. A helical transmembrane segment spans residues 225–245 (KLWIIGTIFPVAGYSLGFLLA). Residues 246–284 (RIAGLPWYRCRTVAFETGMQNTQLCSTIVQLSFTPEELN) are Extracellular-facing. The chain crosses the membrane as a helical span at residues 285 to 305 (VVFTFPLIYSIFQLAFAAIFL). Over 306–348 (GFYVAYKKCHGKNKAEIPESKENGTEPESSFYKANGGFQPDEK) the chain is Cytoplasmic. A compositionally biased stretch (basic and acidic residues) spans 320 to 329 (AEIPESKENG). The segment at 320 to 348 (AEIPESKENGTEPESSFYKANGGFQPDEK) is disordered. Position 335 is a phosphoserine (S335).

This sequence belongs to the bile acid:sodium symporter (BASS) (TC 2.A.28) family. As to quaternary structure, monomer and homodimer. In terms of tissue distribution, mainly expressed in ileum and kidney, lower expression in cecum.

It is found in the membrane. It carries out the reaction taurocholate(out) + 2 Na(+)(out) = taurocholate(in) + 2 Na(+)(in). The catalysed reaction is cholate(out) + 2 Na(+)(out) = cholate(in) + 2 Na(+)(in). It catalyses the reaction taurochenodeoxycholate(out) + 2 Na(+)(out) = taurochenodeoxycholate(in) + 2 Na(+)(in). The enzyme catalyses tauroursodeoxycholate(out) + 2 Na(+)(out) = tauroursodeoxycholate(in) + 2 Na(+)(in). It carries out the reaction glycocholate(out) + 2 Na(+)(out) = glycocholate(in) + 2 Na(+)(in). The catalysed reaction is tauronorcholate(out) + 2 Na(+)(out) = tauronorcholate(in) + 2 Na(+)(in). It catalyses the reaction tauroallocholate(out) + 2 Na(+)(out) = tauroallocholate(in) + 2 Na(+)(in). The enzyme catalyses taurodeoxycholate(out) + 2 Na(+)(out) = taurodeoxycholate(in) + 2 Na(+)(in). It carries out the reaction tauro-beta-muricholate(out) + 2 Na(+)(out) = tauro-beta-muricholate(in) + 2 Na(+)(in). In terms of biological role, plays a critical role in the sodium-dependent reabsorption of bile acids from the lumen of the small intestine. Transports various bile acids, unconjugated or conjugated, such as cholate and taurocholate. Also responsible for bile acid transport in the renal proximal tubules, a salvage mechanism that helps conserve bile acids. Works collaboratively with the Na(+)-taurocholate cotransporting polypeptide (NTCP), the organic solute transporter (OST), and the bile salt export pump (BSEP), to ensure efficacious biological recycling of bile acids during enterohepatic circulation. The chain is Ileal sodium/bile acid cotransporter (SLC10A2) from Homo sapiens (Human).